Here is a 240-residue protein sequence, read N- to C-terminus: Ubiquinone biosynthesis O-methyltransferase (240 aa).

S-adenosyl-L-methionine is bound by residues Arg-44, Gly-64, Asp-85, and Met-129.

Belongs to the methyltransferase superfamily. UbiG/COQ3 family.

It carries out the reaction a 3-demethylubiquinol + S-adenosyl-L-methionine = a ubiquinol + S-adenosyl-L-homocysteine + H(+). The catalysed reaction is a 3-(all-trans-polyprenyl)benzene-1,2-diol + S-adenosyl-L-methionine = a 2-methoxy-6-(all-trans-polyprenyl)phenol + S-adenosyl-L-homocysteine + H(+). The protein operates within cofactor biosynthesis; ubiquinone biosynthesis. Its function is as follows. O-methyltransferase that catalyzes the 2 O-methylation steps in the ubiquinone biosynthetic pathway. The sequence is that of Ubiquinone biosynthesis O-methyltransferase from Shigella flexneri serotype 5b (strain 8401).